We begin with the raw amino-acid sequence, 319 residues long: Formimidoylglutamase (319 aa).

The Mn(2+) site is built by H127, D150, H152, D154, D242, and D244.

It belongs to the arginase family. The cofactor is Mn(2+).

It catalyses the reaction N-formimidoyl-L-glutamate + H2O = formamide + L-glutamate. It functions in the pathway amino-acid degradation; L-histidine degradation into L-glutamate; L-glutamate from N-formimidoyl-L-glutamate (hydrolase route): step 1/1. In terms of biological role, catalyzes the conversion of N-formimidoyl-L-glutamate to L-glutamate and formamide. The protein is Formimidoylglutamase of Halalkalibacterium halodurans (strain ATCC BAA-125 / DSM 18197 / FERM 7344 / JCM 9153 / C-125) (Bacillus halodurans).